A 449-amino-acid polypeptide reads, in one-letter code: Jacalin-related lectin 20 (449 aa).

Disordered stretches follow at residues 1–20 (MAQR…DDGA) and 294–314 (APPI…GDGG). Alanine 2 carries the post-translational modification N-acetylalanine. Jacalin-type lectin domains are found at residues 2–144 (AQRL…YFTP), 147–294 (PIKQ…HFGA), and 303–446 (TEKL…TVAP).

Belongs to the jacalin lectin family.

This Arabidopsis thaliana (Mouse-ear cress) protein is Jacalin-related lectin 20 (JAL20).